The following is a 322-amino-acid chain: Sideroflexin-2 (322 aa).

An N-acetylmethionine modification is found at M1. Transmembrane regions (helical) follow at residues 100–122 (MIITGFMLQFYRTMPAVIFWQWV), 142–164 (SVRQMALSYFTATTTAVATAVGM), 174–192 (LVGRWVPFAAVAAANCVNI), 228–250 (VVISRITMSAPGMILLPVIMERL), and 265–287 (PLQVMLSGCFLIFMVPVACGLFP).

It belongs to the sideroflexin family. Widely expressed, highest levels in kidney, liver, and pancreas.

It localises to the mitochondrion inner membrane. It is found in the mitochondrion outer membrane. The catalysed reaction is L-serine(in) = L-serine(out). In terms of biological role, mitochondrial amino-acid transporter that mediates transport of serine into mitochondria. Involved in mitochondrial iron homeostasis by regulating heme biosynthesis. The polypeptide is Sideroflexin-2 (Homo sapiens (Human)).